A 278-amino-acid polypeptide reads, in one-letter code: Splicing factor YJU2 (278 aa).

Cys-51, Cys-54, Cys-88, and Cys-91 together coordinate Zn(2+). Residues 228–278 form a disordered region; the sequence is HRQRTNKPGNNNDEKRTPLFNPTSTKGKIQKKSSVRTNPLGIVIKRGKSLK. Short sequence motifs (nuclear localization signal) lie at residues 242–258 and 260–278; these read KRTP…KIQK and SSVR…KSLK.

Belongs to the CWC16 family. YJU2 subfamily. As to quaternary structure, component of the spliceosome. Present in the activated B complex, the catalytically activated B* complex which catalyzes the branching, the catalytic step 1 C complex catalyzing the exon ligation, and the postcatalytic P complex containing the ligated exons (mRNA) and the excised lariat intron. Interacts (via C-terminus) with CLF1. Interacts (via N-terminus) with SYF1. Interacts with U2 snRNA; this interaction is direct. Identified in the CWC complex (or CEF1-associated complex), a spliceosome sub-complex reminiscent of a late-stage spliceosome composed of the U2, U5 and U6 snRNAs and at least BUD13, BUD31, BRR2, CDC40, CEF1, CLF1, CUS1, CWC2, CWC15, CWC21, CWC22, CWC23, CWC24, CWC25, CWC27, ECM2, HSH155, IST3, ISY1, LEA1, MSL1, NTC20, PRP8, PRP9, PRP11, PRP19, PRP21, PRP22, PRP45, PRP46, SLU7, SMB1, SMD1, SMD2, SMD3, SMX2, SMX3, SNT309, SNU114, SPP2, SYF1, SYF2, RSE1 and YJU2.

The protein localises to the nucleus. Part of the spliceosome which catalyzes two sequential transesterification reactions, first the excision of the non-coding intron from pre-mRNA and then the ligation of the coding exons to form the mature mRNA. Plays a role (via N-terminus) in stabilizing the structure of the spliceosome catalytic core and docking of the branch helix into the active site, producing 5'-exon and lariat intron-3'-intermediates. Further stabilizes spliceosome conformation for 3'-splice site docking (via C-terminus) promoting exon ligation. This is Splicing factor YJU2 from Saccharomyces cerevisiae (strain ATCC 204508 / S288c) (Baker's yeast).